Reading from the N-terminus, the 752-residue chain is MIKNQGDRYHLIDKNALEEKKLDSNELTEFVKSSGLIDIGKKYNIVSIIGSQSTGKSTLLNYLFGTQFDVQNRQQSVGQTTVGIWISKDVKNNVVVLDVEGSDSVERKSGENMVENQTALMALAMSHCFIINVFVNALGQHTSCQLSIIKIIMQQNLKLFQQDTVKHIIFVVRDWDEEYNYDEASRKLNGYLLNIWNEIPKPDQYRETDFHELFSVQVVTLVYYKLKNEFAEQTNQLHSKLANQQDPNFIFKDFDYEKNVRWSDMPQYLSNIWVVIANNKDLNLPNEKILISNMRCQQIKLEALEGVKDLTEDLQNRVRTQFVENFGQQCLSILGVAQKIYDKDAKDYHADVYKEKEKELRDELMNKFYTYFQRQTESLKQHYMNRLSENLETLKRESIYDLPDKLNEVDLLKVNFEESLSKSVIEKGLWQEQDHVGFFNQQFDNQLKSFVEAQLASFKQQLDNIIKSECDKIVSQQVLNISPKFWSQIDADYYTMISDKYSKYDALLSGLRVQWKQIDDYLSKFEEDSFHNLKQVIAVASGRFKDQLFQQFKAQFVRTEDGQPRNWQKTTEEEIFHIYTEARDKVFSFLDILRIRKVKFIRIQQTMKKIAKTHLAPFTPLKEKISYQISADTDSDDVVLNEVFYTQVKMQLAEDIDVQYQDAIQKHKQDFLQNIPKPFWFLLLFFMYDDVLRWMGNPLFLYPILIILCFIGFCIAIGLHSLPKLAFQTVFRTINQALLPLIFGGISKLKTS.

At 1–674 the chain is on the cytoplasmic side; it reads MIKNQGDRYH…QKHKQDFLQN (674 aa). In terms of domain architecture, GB1/RHD3-type G spans 40 to 265; the sequence is GKKYNIVSII…YEKNVRWSDM (226 aa). 50–57 lines the GTP pocket; that stretch reads GSQSTGKS. The stretch at 445–465 forms a coiled coil; the sequence is NQLKSFVEAQLASFKQQLDNI. A helical membrane pass occupies residues 675-695; the sequence is IPKPFWFLLLFFMYDDVLRWM. Topologically, residues 696 to 698 are lumenal; sequence GNP. Residues 699–719 traverse the membrane as a helical segment; it reads LFLYPILIILCFIGFCIAIGL. Topologically, residues 720-752 are cytoplasmic; it reads HSLPKLAFQTVFRTINQALLPLIFGGISKLKTS.

It belongs to the TRAFAC class dynamin-like GTPase superfamily. GB1/RHD3 GTPase family. RHD3 subfamily.

Its subcellular location is the endoplasmic reticulum membrane. Probable GTP-binding protein that may be involved in cell development. The polypeptide is Protein SEY1 homolog 1 (Paramecium tetraurelia).